We begin with the raw amino-acid sequence, 587 residues long: Cryptochrome-1 (587 aa).

The Photolyase/cryptochrome alpha/beta domain maps to 3–132 (VNAVHWFRKG…EVIVRISHTL (130 aa)). Lys11 is covalently cross-linked (Glycyl lysine isopeptide (Lys-Gly) (interchain with G-Cter in ubiquitin)). Positions 50–54 (NRWRF) match the LIR 1 motif. A Phosphoserine; by AMPK modification is found at Ser71. The LIR 2 motif lies at 82-87 (DVFPRL). Lys107 participates in a covalent cross-link: Glycyl lysine isopeptide (Lys-Gly) (interchain with G-Cter in ubiquitin). Residues 151–156 (KRFQTL) carry the LIR 3 motif. Lys159 participates in a covalent cross-link: Glycyl lysine isopeptide (Lys-Gly) (interchain with G-Cter in ubiquitin). Ser247 carries the post-translational modification Phosphoserine; by MAPK. Ser252 lines the FAD pocket. Short sequence motifs (LIR) lie at residues 255-260 (LRFGCL) and 271-276 (DLYKKV). A Phosphoserine; by AMPK modification is found at Ser280. The LIR 6 motif lies at 285 to 290 (SLYGQL). Gln289 serves as a coordination point for FAD. Residue Lys329 forms a Glycyl lysine isopeptide (Lys-Gly) (interchain with G-Cter in ubiquitin) linkage. Residues 335–339 (TGFPW) carry the LIR 7 motif. His355 provides a ligand contact to FAD. The segment at 371–470 (WISWEEGMKV…LIGVNYPKPM (100 aa)) is required for inhibition of CLOCK-BMAL1-mediated transcription. The LIR 8 motif lies at 379–384 (KVFEEL). 387–389 (DAD) serves as a coordination point for FAD. 3 short sequence motifs (LIR) span residues 395-400 (GSWMWL), 411-416 (HCYCPV), and 430-435 (RRYLPV). Residues 471–493 (VNHAEASRLNIERMKQIYQQLSR) form an interaction with TIMELESS region. Lys485 is covalently cross-linked (Glycyl lysine isopeptide (Lys-Gly) (interchain with G-Cter in ubiquitin)). 2 consecutive short sequence motifs (LIR) follow at residues 486–491 (QIYQQL) and 492–497 (SRYRGL). The disordered stretch occupies residues 554-587 (GSSSMGHGLSNGKRPSQEEDTQSIGPKVQRQSTN). The residue at position 569 (Ser569) is a Phosphoserine.

It belongs to the DNA photolyase class-1 family. In terms of assembly, component of the circadian core oscillator, which includes the CRY proteins, CLOCK or NPAS2, BMAL1 or BMAL2, CSNK1D and/or CSNK1E, TIMELESS, and the PER proteins. Interacts directly with TIMELESS. Interacts directly with PER1, PER2 and PER3; interaction with PER2 inhibits its ubiquitination and vice versa. Interacts with FBXL21. Interacts with FBXL3. Interacts with CLOCK-BMAL1 independently of PER2 and DNA. Interacts with HDAC1, HDAC2 and SIN3B. Interacts with nuclear receptors AR, NR1D1, NR3C1/GR, RORA and RORC; the interaction with at least NR3C1/GR is ligand dependent. Interacts with PRKDC. Interacts with the G protein subunit alpha GNAS; the interaction may block GPCR-mediated regulation of cAMP concentrations. Interacts with PRMT5. Interacts with EZH2. Interacts with MYBBP1A, DOCK7, HNRNPU, RPL7A, RPL8 and RPS3. Interacts with PPP5C (via TPR repeats). Interacts with MAP1LC3B. Interacts with CLOCK. Interacts with BMAL1. Interacts weakly with HDAC3; this interaction is enhanced in the presence of FBXL3. Interacts with TRIM28, KCTD5 and DDB1 Interacts with HNF4A. Interacts with PSMD2 in a KDM8-dependent manner. Interacts with KDM8 in a FBXL3-dependent manner. Interacts with PPARG in a ligand-dependent manner. Interacts with PPARD (via domain NR LBD) and NR1I2 (via domain NR LBD) in a ligand-dependent manner. Interacts with PPARA, NR1I3 and VDR. Requires FAD as cofactor. It depends on (6R)-5,10-methylene-5,6,7,8-tetrahydrofolate as a cofactor. Phosphorylation on Ser-247 by MAPK is important for the inhibition of CLOCK-BMAL1-mediated transcriptional activity. Phosphorylation by CSNK1E requires interaction with PER1 or PER2. Phosphorylation at Ser-71 and Ser-280 by AMPK decreases protein stability. Phosphorylation at Ser-569 exhibits a robust circadian rhythm with a peak at CT8, increases protein stability, prevents SCF(FBXL3)-mediated degradation and is antagonized by interaction with PRKDC. Post-translationally, ubiquitinated by the SCF(FBXL3) and SCF(FBXL21) complexes, regulating the balance between degradation and stabilization. The SCF(FBXL3) complex is mainly nuclear and mediates ubiquitination and subsequent degradation of CRY1. In contrast, cytoplasmic SCF(FBXL21) complex-mediated ubiquitination leads to stabilize CRY1 and counteract the activity of the SCF(FBXL3) complex. The SCF(FBXL3) and SCF(FBXL21) complexes probably mediate ubiquitination at different Lys residues. Ubiquitination at Lys-11 and Lys-107 are specifically ubiquitinated by the SCF(FBXL21) complex but not by the SCF(FBXL3) complex. Ubiquitination may be inhibited by PER2. Deubiquitinated by USP7. In terms of processing, undergoes autophagy-mediated degradation in the liver in a time-dependent manner. Autophagic degradation of CRY1 (an inhibitor of gluconeogenesis) occurs during periods of reduced feeding allowing induction of gluconeogenesis and maintenance of blood glucose levels. In terms of tissue distribution, expressed in all tissues tested including spleen, liver, skeletal muscle, kidney, brain, intestine, eye, harderian gland, liver and heart. Highest levels in the eye, brain, kidney and harderian gland. In the brain, especially located to the suprachiasma nucleus (SCN).

It is found in the cytoplasm. The protein localises to the nucleus. Functionally, transcriptional repressor which forms a core component of the circadian clock. The circadian clock, an internal time-keeping system, regulates various physiological processes through the generation of approximately 24 hour circadian rhythms in gene expression, which are translated into rhythms in metabolism and behavior. It is derived from the Latin roots 'circa' (about) and 'diem' (day) and acts as an important regulator of a wide array of physiological functions including metabolism, sleep, body temperature, blood pressure, endocrine, immune, cardiovascular, and renal function. Consists of two major components: the central clock, residing in the suprachiasmatic nucleus (SCN) of the brain, and the peripheral clocks that are present in nearly every tissue and organ system. Both the central and peripheral clocks can be reset by environmental cues, also known as Zeitgebers (German for 'timegivers'). The predominant Zeitgeber for the central clock is light, which is sensed by retina and signals directly to the SCN. The central clock entrains the peripheral clocks through neuronal and hormonal signals, body temperature and feeding-related cues, aligning all clocks with the external light/dark cycle. Circadian rhythms allow an organism to achieve temporal homeostasis with its environment at the molecular level by regulating gene expression to create a peak of protein expression once every 24 hours to control when a particular physiological process is most active with respect to the solar day. Transcription and translation of core clock components (CLOCK, NPAS2, BMAL1, BMAL2, PER1, PER2, PER3, CRY1 and CRY2) plays a critical role in rhythm generation, whereas delays imposed by post-translational modifications (PTMs) are important for determining the period (tau) of the rhythms (tau refers to the period of a rhythm and is the length, in time, of one complete cycle). A diurnal rhythm is synchronized with the day/night cycle, while the ultradian and infradian rhythms have a period shorter and longer than 24 hours, respectively. Disruptions in the circadian rhythms contribute to the pathology of cardiovascular diseases, cancer, metabolic syndromes and aging. A transcription/translation feedback loop (TTFL) forms the core of the molecular circadian clock mechanism. Transcription factors, CLOCK or NPAS2 and BMAL1 or BMAL2, form the positive limb of the feedback loop, act in the form of a heterodimer and activate the transcription of core clock genes and clock-controlled genes (involved in key metabolic processes), harboring E-box elements (5'-CACGTG-3') within their promoters. The core clock genes: PER1/2/3 and CRY1/2 which are transcriptional repressors form the negative limb of the feedback loop and interact with the CLOCK|NPAS2-BMAL1|BMAL2 heterodimer inhibiting its activity and thereby negatively regulating their own expression. This heterodimer also activates nuclear receptors NR1D1/2 and RORA/B/G, which form a second feedback loop and which activate and repress BMAL1 transcription, respectively. CRY1 and CRY2 have redundant functions but also differential and selective contributions at least in defining the pace of the SCN circadian clock and its circadian transcriptional outputs. More potent transcriptional repressor in cerebellum and liver than CRY2, though more effective in lengthening the period of the SCN oscillator. On its side, CRY2 seems to play a critical role in tuning SCN circadian period by opposing the action of CRY1. With CRY2, is dispensable for circadian rhythm generation but necessary for the development of intercellular networks for rhythm synchrony. Capable of translocating circadian clock core proteins such as PER proteins to the nucleus. Interacts with CLOCK-BMAL1 independently of PER proteins and is found at CLOCK-BMAL1-bound sites, suggesting that CRY may act as a molecular gatekeeper to maintain CLOCK-BMAL1 in a poised and repressed state until the proper time for transcriptional activation. Represses the CLOCK-BMAL1 induced transcription of BHLHE40/DEC1, ATF4, MTA1, KLF10 and NAMPT. May repress circadian target genes expression in collaboration with HDAC1 and HDAC2 through histone deacetylation. Mediates the clock-control activation of ATR and modulates ATR-mediated DNA damage checkpoint. In liver, mediates circadian regulation of cAMP signaling and gluconeogenesis by binding to membrane-coupled G proteins and blocking glucagon-mediated increases in intracellular cAMP concentrations and CREB1 phosphorylation. Inhibits hepatic gluconeogenesis by decreasing nuclear FOXO1 levels that down-regulates gluconeogenic gene expression. Besides its role in the maintenance of the circadian clock, is also involved in the regulation of other processes. Represses glucocorticoid receptor NR3C1/GR-induced transcriptional activity by binding to glucocorticoid response elements (GREs). Plays a key role in glucose and lipid metabolism modulation, in part, through the transcriptional regulation of genes involved in these pathways, such as LEP or ACSL4. Represses PPARD and its target genes in the skeletal muscle and limits exercise capacity. Plays an essential role in the generation of circadian rhythms in the retina. Represses the transcriptional activity of NR1I2. The sequence is that of Cryptochrome-1 (CRY1) from Spalax judaei (Judean Mountains blind mole rat).